We begin with the raw amino-acid sequence, 123 residues long: Large ribosomal subunit protein bL19 (123 aa).

It belongs to the bacterial ribosomal protein bL19 family.

This protein is located at the 30S-50S ribosomal subunit interface and may play a role in the structure and function of the aminoacyl-tRNA binding site. This Treponema pallidum (strain Nichols) protein is Large ribosomal subunit protein bL19 (rplS).